The chain runs to 67 residues: SPbeta prophage-derived uncharacterized protein YoqF (67 aa).

In Bacillus subtilis (strain 168), this protein is SPbeta prophage-derived uncharacterized protein YoqF (yoqF).